Reading from the N-terminus, the 165-residue chain is Probable chemoreceptor glutamine deamidase CheD (165 aa).

This sequence belongs to the CheD family.

It catalyses the reaction L-glutaminyl-[protein] + H2O = L-glutamyl-[protein] + NH4(+). Probably deamidates glutamine residues to glutamate on methyl-accepting chemotaxis receptors (MCPs), playing an important role in chemotaxis. The protein is Probable chemoreceptor glutamine deamidase CheD of Clostridium tetani (strain Massachusetts / E88).